Reading from the N-terminus, the 368-residue chain is Peptide chain release factor 2 (368 aa).

Residue Gln251 is modified to N5-methylglutamine.

This sequence belongs to the prokaryotic/mitochondrial release factor family. Post-translationally, methylated by PrmC. Methylation increases the termination efficiency of RF2.

The protein localises to the cytoplasm. In terms of biological role, peptide chain release factor 2 directs the termination of translation in response to the peptide chain termination codons UGA and UAA. This chain is Peptide chain release factor 2, found in Streptomyces avermitilis (strain ATCC 31267 / DSM 46492 / JCM 5070 / NBRC 14893 / NCIMB 12804 / NRRL 8165 / MA-4680).